Here is a 295-residue protein sequence, read N- to C-terminus: Glutamyl-Q tRNA(Asp) synthetase (295 aa).

L-glutamate-binding positions include 9–13 (RFAPT) and E45. The 'HIGH' region motif lies at 12-22 (PTPSGYLHFGS). Residues C101, C103, Y115, and C119 each contribute to the Zn(2+) site. L-glutamate-binding residues include Y172 and R190. A 'KMSKS' region motif is present at residues 228 to 232 (KLGKS). K231 serves as a coordination point for ATP.

This sequence belongs to the class-I aminoacyl-tRNA synthetase family. GluQ subfamily. Requires Zn(2+) as cofactor.

In terms of biological role, catalyzes the tRNA-independent activation of glutamate in presence of ATP and the subsequent transfer of glutamate onto a tRNA(Asp). Glutamate is transferred on the 2-amino-5-(4,5-dihydroxy-2-cyclopenten-1-yl) moiety of the queuosine in the wobble position of the QUC anticodon. In Pseudomonas syringae pv. tomato (strain ATCC BAA-871 / DC3000), this protein is Glutamyl-Q tRNA(Asp) synthetase.